The following is a 70-amino-acid chain: V-type proton ATPase subunit e1 (70 aa).

Helical transmembrane passes span 1-21 (MGFL…SLCV) and 36-56 (LTLV…VYIA).

The protein belongs to the V-ATPase e1/e2 subunit family. As to quaternary structure, V-ATPase is a heteromultimeric enzyme composed of a peripheral catalytic V1 complex (components A to H) attached to an integral membrane V0 proton pore complex (components: a, c, c'', d and e).

The protein localises to the golgi apparatus. The protein resides in the trans-Golgi network membrane. In terms of biological role, subunit of the integral membrane V0 complex of vacuolar ATPase. V-ATPase is responsible for acidifying a variety of intracellular compartments in eukaryotic cells. In Arabidopsis thaliana (Mouse-ear cress), this protein is V-type proton ATPase subunit e1 (VHA-e1).